The primary structure comprises 211 residues: Histidine biosynthesis bifunctional protein HisIE (211 aa).

The segment at 1–118 (MNVDDLTFDD…IYGASDRFGI (118 aa)) is phosphoribosyl-AMP cyclohydrolase. Residues 119–211 (IATLEALIAE…LEERHRPKEE (93 aa)) form a phosphoribosyl-ATP pyrophosphohydrolase region.

The protein in the N-terminal section; belongs to the PRA-CH family. In the C-terminal section; belongs to the PRA-PH family.

The protein resides in the cytoplasm. The catalysed reaction is 1-(5-phospho-beta-D-ribosyl)-ATP + H2O = 1-(5-phospho-beta-D-ribosyl)-5'-AMP + diphosphate + H(+). It catalyses the reaction 1-(5-phospho-beta-D-ribosyl)-5'-AMP + H2O = 1-(5-phospho-beta-D-ribosyl)-5-[(5-phospho-beta-D-ribosylamino)methylideneamino]imidazole-4-carboxamide. Its pathway is amino-acid biosynthesis; L-histidine biosynthesis; L-histidine from 5-phospho-alpha-D-ribose 1-diphosphate: step 2/9. It participates in amino-acid biosynthesis; L-histidine biosynthesis; L-histidine from 5-phospho-alpha-D-ribose 1-diphosphate: step 3/9. The sequence is that of Histidine biosynthesis bifunctional protein HisIE (hisI) from Halalkalibacterium halodurans (strain ATCC BAA-125 / DSM 18197 / FERM 7344 / JCM 9153 / C-125) (Bacillus halodurans).